A 158-amino-acid chain; its full sequence is Large ribosomal subunit protein eL20z (158 aa).

This sequence belongs to the eukaryotic ribosomal protein eL20 family.

This Arabidopsis thaliana (Mouse-ear cress) protein is Large ribosomal subunit protein eL20z (RPL18A1).